The primary structure comprises 920 residues: 2-oxoadipate dehydrogenase complex component E1 (920 aa).

2 positions are modified to N6-succinyllysine: lysine 183 and lysine 188. The segment at 299–318 (GKTRGRQQSQEDGDYSPNGS) is disordered. N6-succinyllysine occurs at positions 800 and 818.

Belongs to the alpha-ketoglutarate dehydrogenase family. As to quaternary structure, the 2-oxoadipate dehydrogenase complex is composed of OADH (2-oxoadipate dehydrogenase; E1a), DLST (dihydrolipoamide succinyltransferase; E2) and DLD (dihydrolipoamide dehydrogenase; E3). E1a functional unit is a dimer. Thiamine diphosphate serves as cofactor.

Its subcellular location is the mitochondrion. The enzyme catalyses N(6)-[(R)-lipoyl]-L-lysyl-[protein] + 2-oxoadipate + H(+) = N(6)-[(R)-S(8)-glutaryldihydrolipoyl]-L-lysyl-[protein] + CO2. It participates in amino-acid degradation. In terms of biological role, 2-oxoadipate dehydrogenase (E1a) component of the 2-oxoadipate dehydrogenase complex (OADHC). Participates in the first step, rate limiting for the overall conversion of 2-oxoadipate (alpha-ketoadipate) to glutaryl-CoA and CO(2) catalyzed by the whole OADHC. Catalyzes the irreversible decarboxylation of 2-oxoadipate via the thiamine diphosphate (ThDP) cofactor and subsequent transfer of the decarboxylated acyl intermediate on an oxidized dihydrolipoyl group that is covalently amidated to the E2 enzyme (dihydrolipoyllysine-residue succinyltransferase or DLST). Can catalyze the decarboxylation of 2-oxoglutarate in vitro, but at a much lower rate than 2-oxoadipate. Responsible for the last step of L-lysine, L-hydroxylysine and L-tryptophan catabolism with the common product being 2-oxoadipate. This is 2-oxoadipate dehydrogenase complex component E1 (Dhtkd1) from Rattus norvegicus (Rat).